The sequence spans 295 residues: UDP-N-acetylenolpyruvoylglucosamine reductase (295 aa).

Positions 23–188 (KVGGPADFLA…ISAKFALKPG (166 aa)) constitute an FAD-binding PCMH-type domain. The active site involves R167. S217 functions as the Proton donor in the catalytic mechanism. Residue E287 is part of the active site.

The protein belongs to the MurB family. It depends on FAD as a cofactor.

The protein resides in the cytoplasm. It carries out the reaction UDP-N-acetyl-alpha-D-muramate + NADP(+) = UDP-N-acetyl-3-O-(1-carboxyvinyl)-alpha-D-glucosamine + NADPH + H(+). It participates in cell wall biogenesis; peptidoglycan biosynthesis. Cell wall formation. The chain is UDP-N-acetylenolpyruvoylglucosamine reductase from Streptococcus pyogenes serotype M28 (strain MGAS6180).